The following is a 466-amino-acid chain: 3-isopropylmalate dehydratase large subunit (466 aa).

[4Fe-4S] cluster is bound by residues Cys-349, Cys-410, and Cys-413.

The protein belongs to the aconitase/IPM isomerase family. LeuC type 1 subfamily. Heterodimer of LeuC and LeuD. The cofactor is [4Fe-4S] cluster.

It catalyses the reaction (2R,3S)-3-isopropylmalate = (2S)-2-isopropylmalate. The protein operates within amino-acid biosynthesis; L-leucine biosynthesis; L-leucine from 3-methyl-2-oxobutanoate: step 2/4. Functionally, catalyzes the isomerization between 2-isopropylmalate and 3-isopropylmalate, via the formation of 2-isopropylmaleate. This Ruthia magnifica subsp. Calyptogena magnifica protein is 3-isopropylmalate dehydratase large subunit.